Reading from the N-terminus, the 1037-residue chain is Nucleoporin NUP120 (1037 aa).

Leucine-zipper regions lie at residues 131–152 (LQLP…WFHL) and 290–311 (LLPL…SGIL). At T417 the chain carries Phosphothreonine.

In terms of assembly, component of the nuclear pore complex (NPC). NPC constitutes the exclusive means of nucleocytoplasmic transport. NPCs allow the passive diffusion of ions and small molecules and the active, nuclear transport receptor-mediated bidirectional transport of macromolecules such as proteins, RNAs, ribonucleoparticles (RNPs), and ribosomal subunits across the nuclear envelope. Due to its 8-fold rotational symmetry, all subunits are present with 8 copies or multiples thereof. NUP120 is part of the heptameric 0.5 MDa autoassembling NUP84 NPC subcomplex (NUP84, NUP85, NUP120, NUP133, NUP145C, SEC13 and SEH1).

Its subcellular location is the nucleus. The protein resides in the nuclear pore complex. The protein localises to the nucleus membrane. In terms of biological role, functions as a component of the nuclear pore complex (NPC). NPC components, collectively referred to as nucleoporins (NUPs), can play the role of both NPC structural components and of docking or interaction partners for transiently associated nuclear transport factors. NUP120 is involved in nuclear poly(A)+ RNA and pre-ribosome export, in GSP1 nuclear import, in NPC assembly and distribution, as well as in nuclear envelope organization. This is Nucleoporin NUP120 (NUP120) from Saccharomyces cerevisiae (strain ATCC 204508 / S288c) (Baker's yeast).